Reading from the N-terminus, the 432-residue chain is Adenylosuccinate synthetase (432 aa).

GTP contacts are provided by residues 13-19 (GDEGKGK) and 41-43 (GHT). Catalysis depends on D14, which acts as the Proton acceptor. Mg(2+) is bound by residues D14 and G41. Residues 14–17 (DEGK), 39–42 (NAGH), T130, R144, Q225, T240, and R304 contribute to the IMP site. H42 functions as the Proton donor in the catalytic mechanism. 300–306 (ATTGRRR) is a substrate binding site. GTP is bound by residues R306, 332–334 (KLD), and 415–417 (STG).

Belongs to the adenylosuccinate synthetase family. In terms of assembly, homodimer. The cofactor is Mg(2+).

The protein localises to the cytoplasm. The catalysed reaction is IMP + L-aspartate + GTP = N(6)-(1,2-dicarboxyethyl)-AMP + GDP + phosphate + 2 H(+). It participates in purine metabolism; AMP biosynthesis via de novo pathway; AMP from IMP: step 1/2. Plays an important role in the de novo pathway of purine nucleotide biosynthesis. Catalyzes the first committed step in the biosynthesis of AMP from IMP. The sequence is that of Adenylosuccinate synthetase from Escherichia coli (strain K12).